The primary structure comprises 406 residues: Argininosuccinate synthase (406 aa).

8 to 16 (AYSGGLDTS) is a binding site for ATP. An L-citrulline-binding site is contributed by tyrosine 86. ATP is bound at residue glycine 116. L-aspartate contacts are provided by threonine 118, asparagine 122, and aspartate 123. Residue asparagine 122 participates in L-citrulline binding. L-citrulline contacts are provided by arginine 126, serine 174, glutamate 259, and tyrosine 271.

It belongs to the argininosuccinate synthase family. Type 1 subfamily. Homotetramer.

It is found in the cytoplasm. The enzyme catalyses L-citrulline + L-aspartate + ATP = 2-(N(omega)-L-arginino)succinate + AMP + diphosphate + H(+). The protein operates within amino-acid biosynthesis; L-arginine biosynthesis; L-arginine from L-ornithine and carbamoyl phosphate: step 2/3. In Lacticaseibacillus paracasei (strain ATCC 334 / BCRC 17002 / CCUG 31169 / CIP 107868 / KCTC 3260 / NRRL B-441) (Lactobacillus paracasei), this protein is Argininosuccinate synthase.